Reading from the N-terminus, the 344-residue chain is Eukaryotic translation initiation factor 2 subunit alpha (344 aa).

The S1 motif domain occupies 21 to 92 (DMAVMIQVKT…ERGYIDLSKR (72 aa)). Serine 56 is modified (phosphoserine; by GCN2). The interval 309–344 (LRMDNEEMSGDEGSEDEEEDTGMGEVDIDGGSGIIE) is disordered. Residues 314–336 (EEMSGDEGSEDEEEDTGMGEVDI) show a composition bias toward acidic residues. Phosphoserine; by CK2 is present on residues serine 317 and serine 322.

It belongs to the eIF-2-alpha family. As to quaternary structure, eukaryotic translation initiation factor 2 eIF2 is a heterotrimeric complex composed of an alpha, a beta and a gamma subunit. Post-translationally, phosphorylated at Ser-56 by GCN2. Phosphorylated at Ser-317 and Ser-322 by CK2.

Its subcellular location is the cytoplasm. The protein localises to the cytosol. Functions in the early steps of protein synthesis by forming a ternary complex with GTP and initiator tRNA. This complex binds to a 40S ribosomal subunit, followed by mRNA binding to form a 43S pre-initiation complex. Junction of the 60S ribosomal subunit to form the 80S initiation complex is preceded by hydrolysis of the GTP bound to eIF-2 and release of an eIF-2-GDP binary complex. In order for eIF-2 to recycle and catalyze another round of initiation, the GDP bound to eIF-2 must exchange with GTP by way of a reaction catalyzed by eIF2B. The protein is Eukaryotic translation initiation factor 2 subunit alpha of Arabidopsis thaliana (Mouse-ear cress).